Here is a 589-residue protein sequence, read N- to C-terminus: O-fucosyltransferase 11 (589 aa).

The interval 1-37 (MKSKIHHQPNGSNNGVVSSNDNGCRSESPSPPLSPNR) is disordered. The segment covering 10 to 23 (NGSNNGVVSSNDNG) has biased composition (low complexity). Residues 68 to 88 (MIYASGLLMCVGPFSGLVGWV) form a helical; Signal-anchor for type II membrane protein membrane-spanning segment. Residues N112, N136, and N239 are each glycosylated (N-linked (GlcNAc...) asparagine). A substrate-binding site is contributed by 332 to 334 (HLR). N405, N406, and N564 each carry an N-linked (GlcNAc...) asparagine glycan.

This sequence belongs to the glycosyltransferase GT106 family.

Its subcellular location is the membrane. It participates in glycan metabolism. The protein is O-fucosyltransferase 11 of Arabidopsis thaliana (Mouse-ear cress).